The sequence spans 387 residues: Exodeoxyribonuclease 7 large subunit (387 aa).

It belongs to the XseA family. As to quaternary structure, heterooligomer composed of large and small subunits.

Its subcellular location is the cytoplasm. The catalysed reaction is Exonucleolytic cleavage in either 5'- to 3'- or 3'- to 5'-direction to yield nucleoside 5'-phosphates.. Its function is as follows. Bidirectionally degrades single-stranded DNA into large acid-insoluble oligonucleotides, which are then degraded further into small acid-soluble oligonucleotides. This chain is Exodeoxyribonuclease 7 large subunit, found in Parasynechococcus marenigrum (strain WH8102).